The primary structure comprises 241 residues: Queuine tRNA-ribosyltransferase-like protein (241 aa).

Belongs to the queuine tRNA-ribosyltransferase family.

The polypeptide is Queuine tRNA-ribosyltransferase-like protein (Plasmodium falciparum).